Reading from the N-terminus, the 179-residue chain is MAKLHDYYKDEVVSKLMTEFNYNSVMQVPRVEKITLNMGVGEAIADKKLLDNAAADLTAISGQKPLITKARKSVAGFKIRQGYPIGCKVTLRGERMWEFLERLISIAVPRIRDFRGLSAKSFDGRGNYSMGVREQIIFPEIDYDKVDRVRGLDITITTTANSDEEGRALLAAFDFPFRK.

Belongs to the universal ribosomal protein uL5 family. As to quaternary structure, part of the 50S ribosomal subunit; part of the 5S rRNA/L5/L18/L25 subcomplex. Contacts the 5S rRNA and the P site tRNA. Forms a bridge to the 30S subunit in the 70S ribosome.

Functionally, this is one of the proteins that bind and probably mediate the attachment of the 5S RNA into the large ribosomal subunit, where it forms part of the central protuberance. In the 70S ribosome it contacts protein S13 of the 30S subunit (bridge B1b), connecting the 2 subunits; this bridge is implicated in subunit movement. Contacts the P site tRNA; the 5S rRNA and some of its associated proteins might help stabilize positioning of ribosome-bound tRNAs. The sequence is that of Large ribosomal subunit protein uL5 from Enterobacter sp. (strain 638).